Reading from the N-terminus, the 237-residue chain is UPF0174 protein YaaW (237 aa).

The protein belongs to the UPF0174 family.

In Escherichia coli O157:H7, this protein is UPF0174 protein YaaW.